The chain runs to 398 residues: Rhizopuspepsin-4 (398 aa).

The first 21 residues, 1–21, serve as a signal peptide directing secretion; the sequence is MKFTLISSCVALACMALAVEA. A propeptide spans 22–74 (activation peptide); the sequence is APSGKKINVPLSKNANYKPNAKRAIEKANAKYARFRSSSSSSSSSSCGSAGTE. The span at 58 to 78 shows a compositional bias: low complexity; it reads SSSSSSSSSSCGSAGTESSGS. The segment at 58 to 83 is disordered; the sequence is SSSSSSSSSSCGSAGTESSGSVPVTD. The Peptidase A1 domain maps to 90–394; the sequence is YYGEVTVGTP…NPQVPQVQIA (305 aa). Asp108 is an active-site residue. Cysteines 121 and 124 form a disulfide. The active site involves Asp291. A disulfide bridge links Cys325 with Cys358.

This sequence belongs to the peptidase A1 family.

The enzyme catalyses Hydrolysis of proteins with broad specificity similar to that of pepsin A, preferring hydrophobic residues at P1 and P1'. Clots milk and activates trypsinogen. Does not cleave 4-Gln-|-His-5, but does cleave 10-His-|-Leu-11 and 12-Val-|-Glu-13 in B chain of insulin.. The protein is Rhizopuspepsin-4 of Rhizopus niveus.